The sequence spans 117 residues: Large ribosomal subunit protein uL18 (117 aa).

The protein belongs to the universal ribosomal protein uL18 family. In terms of assembly, part of the 50S ribosomal subunit; part of the 5S rRNA/L5/L18/L25 subcomplex. Contacts the 5S and 23S rRNAs.

Its function is as follows. This is one of the proteins that bind and probably mediate the attachment of the 5S RNA into the large ribosomal subunit, where it forms part of the central protuberance. This is Large ribosomal subunit protein uL18 from Blochmanniella floridana.